The primary structure comprises 505 residues: Putative F-box protein At1g58310 (505 aa).

The 49-residue stretch at 7–55 folds into the F-box domain; that stretch reads RDIISGLPDSLLCHILSFLNTKEAASTSVLAKKWRYLFASVPNLDFDDS.

This chain is Putative F-box protein At1g58310, found in Arabidopsis thaliana (Mouse-ear cress).